Here is a 27-residue protein sequence, read N- to C-terminus: QAVLSETGGGDTASCDEYLYQELAYVK.

The active-site Nucleophile is Glu-6.

It catalyses the reaction Endohydrolysis of (1-&gt;4)-beta-D-glucosidic linkages in cellulose, lichenin and cereal beta-D-glucans.. Activity is stimulated by zinc ions, potassium ions and DTT. Activity is inhibited by manganese and chloride ions. Endoglucanase (EG) that cleaves the internal beta-1,4-glucosidic bonds in cellulose. The chain is Endoglucanase gh5 from Fomes meliae (Fomitopsis meliae).